The chain runs to 97 residues: Large ribosomal subunit protein uL23 (97 aa).

The protein belongs to the universal ribosomal protein uL23 family. In terms of assembly, part of the 50S ribosomal subunit. Contacts protein L29, and trigger factor when it is bound to the ribosome.

In terms of biological role, one of the early assembly proteins it binds 23S rRNA. One of the proteins that surrounds the polypeptide exit tunnel on the outside of the ribosome. Forms the main docking site for trigger factor binding to the ribosome. The chain is Large ribosomal subunit protein uL23 from Chelativorans sp. (strain BNC1).